The chain runs to 353 residues: Endophilin-A1 (353 aa).

The interval 1-21 is membrane-binding amphipathic helix; that stretch reads MSVAGLKKQFHKATQKVSEKV. Positions 1–27 are disordered; the sequence is MSVAGLKKQFHKATQKVSEKVGGAEGT. Positions 1–125 are binds and tubulates liposomes; that stretch reads MSVAGLKKQF…DVGEAMKELS (125 aa). The BAR domain maps to 18 to 249; that stretch reads SEKVGGAEGT…LEDRIKEASS (232 aa). Positions 60–87 are required for dimerization upon membrane association; the sequence is PNPASRAKLSMINTMSKIRGQEKGPGYP. Positions 181-201 form a coiled coil; it reads EELRQALEKFDESKEIAESSM. Residues 243 to 257 show a composition bias toward basic and acidic residues; the sequence is RIKEASSQPKREYQP. A disordered region spans residues 243–290; that stretch reads RIKEASSQPKREYQPKPRMSLDFTSGGDNTQHNGGISHATTPKPAGAH. A compositionally biased stretch (polar residues) spans 264–282; it reads DFTSGGDNTQHNGGISHAT. The region spanning 291-350 is the SH3 domain; the sequence is MDQPCCRALYDFEPENEGELGFKEGDIITLTNQIDENWYEGMLHGQSGFFPINYVDILVP.

This sequence belongs to the endophilin family. Monomer; in cytoplasm. Homodimer; when associated with membranes. Associates with MAP4K3. This interaction appears to regulate MAP4K3-mediated JNK activation. Interacts with SYNJ1 and DNM1. In terms of tissue distribution, highly expressed in brain.

It is found in the cytoplasm. The protein localises to the membrane. It localises to the early endosome. The protein resides in the presynapse. Implicated in synaptic vesicle endocytosis. May recruit other proteins to membranes with high curvature. This is Endophilin-A1 from Gallus gallus (Chicken).